Reading from the N-terminus, the 364-residue chain is Ferrochelatase (364 aa).

Positions 210 and 291 each coordinate Fe cation.

The protein belongs to the ferrochelatase family.

Its subcellular location is the cytoplasm. The catalysed reaction is heme b + 2 H(+) = protoporphyrin IX + Fe(2+). Its pathway is porphyrin-containing compound metabolism; protoheme biosynthesis; protoheme from protoporphyrin-IX: step 1/1. Functionally, catalyzes the ferrous insertion into protoporphyrin IX. This is Ferrochelatase from Idiomarina loihiensis (strain ATCC BAA-735 / DSM 15497 / L2-TR).